Here is a 239-residue protein sequence, read N- to C-terminus: MIKVLIVDDEPLARENLRILLQGQDDIEIVGECANAVEAIGAVHKLRPDVLFLDIQMPRISGLEMVGMLDPEHRPYIVFLTAFDEYAIKAFEEHAFDYLLKPIEEKRLEKTLHRLRQERSKQDVSLLPENQQALKFIPCTGHSRIYLLQMDDVAFVSSRMSGVYVTSSEGKEGFTELTLRTLESRTPLLRCHRQFLVNMAHLQEIRLEDNGQAELILRNGLTVPVSRRYLKSLKEAIGL.

One can recognise a Response regulatory domain in the interval 3 to 116 (KVLIVDDEPL…RLEKTLHRLR (114 aa)). D54 carries the post-translational modification 4-aspartylphosphate. Positions 137–239 (IPCTGHSRIY…LKSLKEAIGL (103 aa)) constitute an HTH LytTR-type domain.

In terms of processing, phosphorylated by BtsS.

In terms of biological role, member of the two-component regulatory system BtsS/BtsR. BtsR regulates expression of btsT by binding to its promoter region. This chain is Transcriptional regulatory protein BtsR, found in Salmonella typhimurium (strain LT2 / SGSC1412 / ATCC 700720).